The chain runs to 356 residues: tRNA N6-adenosine threonylcarbamoyltransferase (356 aa).

Residues histidine 115 and histidine 119 each coordinate Fe cation. Substrate is bound by residues 138–142, aspartate 171, glycine 184, and asparagine 283; that span reads LVSGG. Aspartate 311 lines the Fe cation pocket.

The protein belongs to the KAE1 / TsaD family. Fe(2+) serves as cofactor.

The protein localises to the cytoplasm. The catalysed reaction is L-threonylcarbamoyladenylate + adenosine(37) in tRNA = N(6)-L-threonylcarbamoyladenosine(37) in tRNA + AMP + H(+). Required for the formation of a threonylcarbamoyl group on adenosine at position 37 (t(6)A37) in tRNAs that read codons beginning with adenine. Is involved in the transfer of the threonylcarbamoyl moiety of threonylcarbamoyl-AMP (TC-AMP) to the N6 group of A37, together with TsaE and TsaB. TsaD likely plays a direct catalytic role in this reaction. The chain is tRNA N6-adenosine threonylcarbamoyltransferase from Prochlorococcus marinus (strain NATL1A).